A 505-amino-acid chain; its full sequence is Glutamate--tRNA ligase (505 aa).

The 'HIGH' region signature appears at 11–21 (PSPTGPLHIGG). Positions 260 to 264 (KLSKR) match the 'KMSKS' region motif. Position 263 (K263) interacts with ATP.

Belongs to the class-I aminoacyl-tRNA synthetase family. Glutamate--tRNA ligase type 1 subfamily. In terms of assembly, monomer.

It is found in the cytoplasm. The enzyme catalyses tRNA(Glu) + L-glutamate + ATP = L-glutamyl-tRNA(Glu) + AMP + diphosphate. Functionally, catalyzes the attachment of glutamate to tRNA(Glu) in a two-step reaction: glutamate is first activated by ATP to form Glu-AMP and then transferred to the acceptor end of tRNA(Glu). In Christiangramia forsetii (strain DSM 17595 / CGMCC 1.15422 / KT0803) (Gramella forsetii), this protein is Glutamate--tRNA ligase.